The primary structure comprises 141 residues: Large-conductance mechanosensitive channel (141 aa).

The next 2 membrane-spanning stretches (helical) occupy residues valine 21 to isoleucine 41 and glycine 85 to valine 105.

Belongs to the MscL family. In terms of assembly, homopentamer.

It localises to the cell inner membrane. Its function is as follows. Channel that opens in response to stretch forces in the membrane lipid bilayer. May participate in the regulation of osmotic pressure changes within the cell. The chain is Large-conductance mechanosensitive channel from Dechloromonas aromatica (strain RCB).